Here is a 180-residue protein sequence, read N- to C-terminus: ATP synthase subunit delta (180 aa).

The protein belongs to the ATPase delta chain family. In terms of assembly, F-type ATPases have 2 components, F(1) - the catalytic core - and F(0) - the membrane proton channel. F(1) has five subunits: alpha(3), beta(3), gamma(1), delta(1), epsilon(1). F(0) has three main subunits: a(1), b(2) and c(10-14). The alpha and beta chains form an alternating ring which encloses part of the gamma chain. F(1) is attached to F(0) by a central stalk formed by the gamma and epsilon chains, while a peripheral stalk is formed by the delta and b chains.

It is found in the cell inner membrane. F(1)F(0) ATP synthase produces ATP from ADP in the presence of a proton or sodium gradient. F-type ATPases consist of two structural domains, F(1) containing the extramembraneous catalytic core and F(0) containing the membrane proton channel, linked together by a central stalk and a peripheral stalk. During catalysis, ATP synthesis in the catalytic domain of F(1) is coupled via a rotary mechanism of the central stalk subunits to proton translocation. Functionally, this protein is part of the stalk that links CF(0) to CF(1). It either transmits conformational changes from CF(0) to CF(1) or is implicated in proton conduction. In Cupriavidus metallidurans (strain ATCC 43123 / DSM 2839 / NBRC 102507 / CH34) (Ralstonia metallidurans), this protein is ATP synthase subunit delta.